Reading from the N-terminus, the 426-residue chain is Histidine--tRNA ligase (426 aa).

It belongs to the class-II aminoacyl-tRNA synthetase family. As to quaternary structure, homodimer.

It localises to the cytoplasm. The catalysed reaction is tRNA(His) + L-histidine + ATP = L-histidyl-tRNA(His) + AMP + diphosphate + H(+). This is Histidine--tRNA ligase from Streptococcus pyogenes serotype M5 (strain Manfredo).